The chain runs to 219 residues: Dual specificity phosphatase 29 (219 aa).

Residues 53–201 (HVNEVWPKLY…LRELDRQLVQ (149 aa)) enclose the Tyrosine-protein phosphatase domain. 145-152 (HCVMGRSR) contacts substrate. Catalysis depends on Cys146, which acts as the Phosphocysteine intermediate.

This sequence belongs to the protein-tyrosine phosphatase family. Non-receptor class dual specificity subfamily. In terms of assembly, homodimer. Interacts with PRKAA2.

Its subcellular location is the cytoplasm. It localises to the nucleus. The catalysed reaction is O-phospho-L-tyrosyl-[protein] + H2O = L-tyrosyl-[protein] + phosphate. It catalyses the reaction O-phospho-L-seryl-[protein] + H2O = L-seryl-[protein] + phosphate. The enzyme catalyses O-phospho-L-threonyl-[protein] + H2O = L-threonyl-[protein] + phosphate. Dual specificity phosphatase able to dephosphorylate phosphotyrosine, phosphoserine and phosphothreonine residues within the same substrate, with a preference for phosphotyrosine as a substrate. Involved in the modulation of intracellular signaling cascades. May regulate glucose metabolism by activating, AMPK, an energy sensor protein kinase. Affects MAP kinase signaling though modulation of the ERK1/2 cascade in skeletal muscle promoting muscle cell differentiation, development and atrophy. This Bos taurus (Bovine) protein is Dual specificity phosphatase 29 (DUSP29).